The following is a 372-amino-acid chain: Cytochrome b (372 aa).

Transmembrane regions (helical) follow at residues 25–45 (FGSM…FLAI), 69–90 (WCLQ…YIHI), 105–125 (WMSG…GYVL), and 170–190 (FFAL…IHII). H75 and H89 together coordinate heme b. H174 and H188 together coordinate heme b. H193 provides a ligand contact to a ubiquinone. Helical transmembrane passes span 218 to 238 (YKDL…MSFS), 280 to 300 (LGGT…PFTH), 312 to 332 (MAQF…WAAS), and 339 to 358 (YITI…IINP).

The protein belongs to the cytochrome b family. The cytochrome bc1 complex contains 3 respiratory subunits (MT-CYB, CYC1 and UQCRFS1), 2 core proteins (UQCRC1 and UQCRC2) and probably 6 low-molecular weight proteins. It depends on heme b as a cofactor.

The protein resides in the mitochondrion inner membrane. In terms of biological role, component of the ubiquinol-cytochrome c reductase complex (complex III or cytochrome b-c1 complex) that is part of the mitochondrial respiratory chain. The b-c1 complex mediates electron transfer from ubiquinol to cytochrome c. Contributes to the generation of a proton gradient across the mitochondrial membrane that is then used for ATP synthesis. This Acrochordus granulatus (Rasp-skinned water snake) protein is Cytochrome b (MT-CYB).